Reading from the N-terminus, the 472-residue chain is Transcription factor TGAL1 (472 aa).

The interval 136-190 (WGESTIADTSPRTDTSTDPDTDERNQMFEQGQLAAPTASDSSDRSKDKLDHKTLR) is disordered. A compositionally biased stretch (low complexity) spans 143–153 (DTSPRTDTSTD). The segment covering 176 to 187 (SSDRSKDKLDHK) has biased composition (basic and acidic residues). One can recognise a bZIP domain in the interval 185 to 229 (DHKTLRRLAQNREAARKSRLRKKAYIQNLESSRLKLTQIEQELQR). The interval 187–207 (KTLRRLAQNREAARKSRLRKK) is basic motif. Residues 213 to 227 (LESSRLKLTQIEQEL) form a leucine-zipper region. One can recognise a DOG1 domain in the interval 252 to 469 (ALAFDMEYAR…RALSSLWLAR (218 aa)).

Belongs to the bZIP family. In terms of assembly, isoforms 1 and 2 interact with NPR2/NH2. Isoform 2 interacts with NPR1/NH1 and NPR3/NH3.

It is found in the nucleus. Functionally, transcriptional regulator involved in defense response. The protein is Transcription factor TGAL1 of Oryza sativa subsp. japonica (Rice).